A 331-amino-acid polypeptide reads, in one-letter code: Germ cell-specific gene 1-like protein (331 aa).

Topologically, residues 1 to 8 (MKTSRRGR) are cytoplasmic. A helical membrane pass occupies residues 9-29 (ALLAVALNLLALLFATTAFLT). Topologically, residues 30–132 (THWCQGTQRV…FIDLAPASEK (103 aa)) are extracellular. The chain crosses the membrane as a helical span at residues 133–153 (GVLWLSVVSEVLYILLLVVGF). Over 154-173 (SLMCLELFHSSNVIDGLKLN) the chain is Cytoplasmic. Residues 174 to 194 (AFAAVFTVLSGLLGMVAHMMY) traverse the membrane as a helical segment. The Extracellular portion of the chain corresponds to 195–217 (TQVFQVTVSLGPEDWRPHSWDYG). Residues 218-238 (WSFCLAWGSFTCCMAASVTTL) form a helical membrane-spanning segment. Over 239–331 (NSYTKTVIEF…RQCWVLGHWV (93 aa)) the chain is Cytoplasmic.

Belongs to the GSG1 family. In terms of assembly, component of the inner core of AMPAR complex. AMPAR complex consists of an inner core made of 4 pore-forming GluA/GRIA proteins (GRIA1, GRIA2, GRIA3 and GRIA4) and 4 major auxiliary subunits arranged in a twofold symmetry. One of the two pairs of distinct binding sites is occupied either by CNIH2, CNIH3 or CACNG2, CACNG3. The other harbors CACNG2, CACNG3, CACNG4, CACNG8 or GSG1L. This inner core of AMPAR complex is complemented by outer core constituents binding directly to the GluA/GRIA proteins at sites distinct from the interaction sites of the inner core constituents. Outer core constituents include at least PRRT1, PRRT2, CKAMP44/SHISA9, FRRS1L and NRN1. The proteins of the inner and outer core serve as a platform for other, more peripherally associated AMPAR constituents. Alone or in combination, these auxiliary subunits control the gating and pharmacology of the AMPAR complex and profoundly impact their biogenesis and protein processing.

The protein localises to the cell membrane. It localises to the synapse. Functionally, as a component of the inner core of AMPAR complex, modifies AMPA receptor (AMPAR) gating. In Homo sapiens (Human), this protein is Germ cell-specific gene 1-like protein (GSG1L).